Reading from the N-terminus, the 300-residue chain is Sulfate adenylyltransferase subunit 2 (300 aa).

A disordered region spans residues 281-300 (RAIDRDEAGSMEKKKREGYF).

Belongs to the PAPS reductase family. CysD subfamily. Heterodimer composed of CysD, the smaller subunit, and CysN.

The enzyme catalyses sulfate + ATP + H(+) = adenosine 5'-phosphosulfate + diphosphate. It functions in the pathway sulfur metabolism; hydrogen sulfide biosynthesis; sulfite from sulfate: step 1/3. With CysN forms the ATP sulfurylase (ATPS) that catalyzes the adenylation of sulfate producing adenosine 5'-phosphosulfate (APS) and diphosphate, the first enzymatic step in sulfur assimilation pathway. APS synthesis involves the formation of a high-energy phosphoric-sulfuric acid anhydride bond driven by GTP hydrolysis by CysN coupled to ATP hydrolysis by CysD. The polypeptide is Sulfate adenylyltransferase subunit 2 (Brucella melitensis biotype 2 (strain ATCC 23457)).